The chain runs to 200 residues: HVA22-like protein k (200 aa).

Residues 176-200 (LGEIANGSPVSETNSDSESDSNHED) form a disordered region.

This sequence belongs to the DP1 family.

The polypeptide is HVA22-like protein k (HVA22K) (Arabidopsis thaliana (Mouse-ear cress)).